The following is a 629-amino-acid chain: tRNA uridine 5-carboxymethylaminomethyl modification enzyme MnmG (629 aa).

FAD contacts are provided by residues 15–20 (GAGHAG), Val-127, and Ser-182. A disordered region spans residues 203–226 (TPPRVKSSTIDYSKTEEQPGDDHP). A compositionally biased stretch (basic and acidic residues) spans 215 to 226 (SKTEEQPGDDHP). 274 to 288 (GARYCPSIEDKIVRF) contacts NAD(+). An FAD-binding site is contributed by Gln-371.

The protein belongs to the MnmG family. In terms of assembly, homodimer. Heterotetramer of two MnmE and two MnmG subunits. It depends on FAD as a cofactor.

It is found in the cytoplasm. NAD-binding protein involved in the addition of a carboxymethylaminomethyl (cmnm) group at the wobble position (U34) of certain tRNAs, forming tRNA-cmnm(5)s(2)U34. The polypeptide is tRNA uridine 5-carboxymethylaminomethyl modification enzyme MnmG (Listeria innocua serovar 6a (strain ATCC BAA-680 / CLIP 11262)).